The chain runs to 490 residues: RNA-binding post-transcriptional regulator cip1 (490 aa).

Disordered regions lie at residues 16–63 (RGLA…GSSA), 76–97 (ASSR…YSQL), and 138–199 (HNVS…GEDT). Polar residues predominate over residues 34-62 (RLQSPLNSPKLQPIGSPQASRKTSGSGSS). Phosphoserine is present on residues Ser-37, Ser-41, Ser-49, Ser-86, and Ser-141. Composition is skewed to low complexity over residues 76-88 (ASSR…PSDS) and 141-160 (SPPS…ASGK). Residues 164–192 (ADTSAEPSLDAFNSTQIKAGSTANSNSTP) are compositionally biased toward polar residues. The region spanning 202 to 280 (TAIVVKNIPF…RRLRVEWKRQ (79 aa)) is the RRM domain. Phosphoserine is present on residues Ser-397, Ser-401, and Ser-427. A Phosphothreonine modification is found at Thr-431. Phosphoserine occurs at positions 435, 456, and 466. The tract at residues 457 to 490 (PLQKASTLSSPFNSKNDNDASTSASKQSFGVSHF) is disordered.

As to quaternary structure, interacts with csx1. Phosphorylated by sty1.

It localises to the cytoplasm. Functionally, regulates global gene expression after oxidative stress. Interacts and stabilizes mRNAs and may regulate their transition between different cytoplasmic components after oxidative stress. The polypeptide is RNA-binding post-transcriptional regulator cip1 (cip1) (Schizosaccharomyces pombe (strain 972 / ATCC 24843) (Fission yeast)).